We begin with the raw amino-acid sequence, 269 residues long: 2-keto-4-pentenoate hydratase (269 aa).

It belongs to the hydratase/decarboxylase family. MhpD subfamily. A divalent metal cation is required as a cofactor.

The enzyme catalyses (S)-4-hydroxy-2-oxopentanoate = (2Z)-2-hydroxypenta-2,4-dienoate + H2O. The protein operates within aromatic compound metabolism; 3-phenylpropanoate degradation. Functionally, catalyzes the conversion of 2-hydroxypentadienoic acid (enolic form of 2-oxopent-4-enoate) to 4-hydroxy-2-ketopentanoic acid. This Paraburkholderia xenovorans (strain LB400) protein is 2-keto-4-pentenoate hydratase.